The following is a 159-amino-acid chain: MDATFWAFIALVIFVAIVVYMKVPGMIGRTLDERADRIKKELEEARTLREEAQQLLAEYHRKRKEAEKEAGDIVASAEREAKALLEEAKRATEEYVARRNKLAEQKIATAETDAINAVRASAVDLAVAAAGSILAEKVDAKAAGNLFNDALAQVKSHLN.

Residues methionine 1–methionine 21 traverse the membrane as a helical segment.

It belongs to the ATPase B chain family. As to quaternary structure, F-type ATPases have 2 components, F(1) - the catalytic core - and F(0) - the membrane proton channel. F(1) has five subunits: alpha(3), beta(3), gamma(1), delta(1), epsilon(1). F(0) has three main subunits: a(1), b(2) and c(10-14). The alpha and beta chains form an alternating ring which encloses part of the gamma chain. F(1) is attached to F(0) by a central stalk formed by the gamma and epsilon chains, while a peripheral stalk is formed by the delta and b chains.

It is found in the cell inner membrane. Its function is as follows. F(1)F(0) ATP synthase produces ATP from ADP in the presence of a proton or sodium gradient. F-type ATPases consist of two structural domains, F(1) containing the extramembraneous catalytic core and F(0) containing the membrane proton channel, linked together by a central stalk and a peripheral stalk. During catalysis, ATP synthesis in the catalytic domain of F(1) is coupled via a rotary mechanism of the central stalk subunits to proton translocation. Functionally, component of the F(0) channel, it forms part of the peripheral stalk, linking F(1) to F(0). The polypeptide is ATP synthase subunit b 2 (Brucella suis (strain ATCC 23445 / NCTC 10510)).